Reading from the N-terminus, the 296-residue chain is Glycine--tRNA ligase alpha subunit (296 aa).

Belongs to the class-II aminoacyl-tRNA synthetase family. As to quaternary structure, tetramer of two alpha and two beta subunits.

Its subcellular location is the cytoplasm. The catalysed reaction is tRNA(Gly) + glycine + ATP = glycyl-tRNA(Gly) + AMP + diphosphate. This chain is Glycine--tRNA ligase alpha subunit, found in Francisella tularensis subsp. holarctica (strain FTNF002-00 / FTA).